The primary structure comprises 761 residues: Protein spire homolog 1 (761 aa).

Disordered regions lie at residues 1–23 (MTDGGMLISPSALQDPGDGARPE) and 160–183 (DCPDEGYEATEEEDEGEEENAEVS). The region spanning 36–223 (LCLEEILTLY…RALYAETKEL (188 aa)) is the KIND domain. The segment covering 160–180 (DCPDEGYEATEEEDEGEEENA) has biased composition (acidic residues). A coiled-coil region spans residues 218–246 (AETKELRTFLEKIKSAKENLRKMEGETEE). 2 consecutive WH2 domains span residues 295-313 (PYEMLMDDIRSKRYKLRKV) and 359-376 (LHERILEEIRSERKLRPV). 2 disordered regions span residues 375–406 (PVSPDMIRRSRLGAGKSISTPQDLFRSSDIPD) and 419–539 (ANGT…KSLA). Low complexity predominate over residues 469–480 (SSSSISTSLVED). Residues 504–520 (PDKRIAPQRRHSIEKEA) are compositionally biased toward basic and acidic residues. The interval 557–577 (LTLTVEEVMHIRQVLVKAELE) is spir-box. Disordered stretches follow at residues 630–694 (PSKP…DELE) and 728–761 (STKRARLHRRTHSVYSSSTSSSNYKPTERTIKEV). Residues 636–647 (SLPISSLGPSIL) are compositionally biased toward low complexity. Residues 682–693 (KHGDRSSSKDEL) are compositionally biased toward basic and acidic residues. Basic residues predominate over residues 728–739 (STKRARLHRRTH). Residues 740–749 (SVYSSSTSSS) show a composition bias toward low complexity.

Belongs to the spire family.

It localises to the cytoplasm. Its subcellular location is the cytoskeleton. The protein localises to the cytosol. It is found in the cleavage furrow. The protein resides in the perinuclear region. It localises to the cell membrane. Its subcellular location is the cytoplasmic vesicle membrane. Its function is as follows. Acts as an actin nucleation factor, remains associated with the slow-growing pointed end of the new filament. Involved in intracellular vesicle transport along actin fibers, providing a novel link between actin cytoskeleton dynamics and intracellular transport. Required for asymmetric spindle positioning and asymmetric cell division during meiosis. Required for normal formation of the cleavage furrow and for polar body extrusion during female germ cell meiosis. Also acts in the nucleus: together with FMN2, promotes assembly of nuclear actin filaments in response to DNA damage in order to facilitate movement of chromatin and repair factors after DNA damage. In addition, promotes innate immune signaling downstream of dsRNA sensing. Mechanistically, contributes to IRF3 phosphorylation and activation downstream of MAVS and upstream of TBK1. This Danio rerio (Zebrafish) protein is Protein spire homolog 1.